The following is a 397-amino-acid chain: Acetate kinase (397 aa).

Asn8 is a binding site for Mg(2+). Lys15 is an ATP binding site. Residue Arg89 participates in substrate binding. Residue Asp146 is the Proton donor/acceptor of the active site. Residues 206 to 210 (HVGNG), 283 to 285 (DMR), and 331 to 335 (GIGEN) each bind ATP. Residue Glu383 coordinates Mg(2+).

It belongs to the acetokinase family. Homodimer. Mg(2+) serves as cofactor. The cofactor is Mn(2+).

Its subcellular location is the cytoplasm. It carries out the reaction acetate + ATP = acetyl phosphate + ADP. Its pathway is metabolic intermediate biosynthesis; acetyl-CoA biosynthesis; acetyl-CoA from acetate: step 1/2. Catalyzes the formation of acetyl phosphate from acetate and ATP. Can also catalyze the reverse reaction. The polypeptide is Acetate kinase (Streptococcus thermophilus (strain ATCC BAA-491 / LMD-9)).